Reading from the N-terminus, the 248-residue chain is Kallikrein-12 (248 aa).

Positions 1 to 17 are cleaved as a signal peptide; sequence MGLSIFLLLCVLGLSQA. Positions 22 to 246 constitute a Peptidase S1 domain; the sequence is IFNGTECGRN…YVDWIRMIMR (225 aa). N-linked (GlcNAc...) asparagine glycosylation occurs at Asn-24. Disulfide bonds link Cys-28-Cys-161, Cys-47-Cys-63, Cys-133-Cys-235, Cys-140-Cys-206, Cys-172-Cys-186, and Cys-196-Cys-222. Catalysis depends on charge relay system residues His-62 and Asp-108. Residue Asn-163 is glycosylated (N-linked (GlcNAc...) asparagine). The active-site Charge relay system is Ser-200.

The protein belongs to the peptidase S1 family. Kallikrein subfamily.

Its subcellular location is the secreted. In Homo sapiens (Human), this protein is Kallikrein-12 (KLK12).